The primary structure comprises 658 residues: Heat shock protein homolog SSE1 (658 aa).

Positions 614 to 627 (KRKEEERKSKKENA) are enriched in basic and acidic residues. The tract at residues 614-658 (KRKEEERKSKKENAQEGTSSKPESKEESEAKEDNDEESDVASIDE) is disordered. Residues 642–658 (EAKEDNDEESDVASIDE) are compositionally biased toward acidic residues.

Belongs to the heat shock protein 70 family.

The protein resides in the cytoplasm. Functionally, required for normal growth at various temperatures. This Encephalitozoon cuniculi (strain GB-M1) (Microsporidian parasite) protein is Heat shock protein homolog SSE1 (SSE1).